A 427-amino-acid polypeptide reads, in one-letter code: Cholecystokinin receptor type A (427 aa).

Residues methionine 1–proline 41 are Extracellular-facing. N-linked (GlcNAc...) asparagine glycosylation is found at asparagine 10 and asparagine 24. Cysteine 18 and cysteine 29 are disulfide-bonded. A helical membrane pass occupies residues alanine 42–isoleucine 67. The Cytoplasmic portion of the chain corresponds to arginine 68–asparagine 77. The chain crosses the membrane as a helical span at residues isoleucine 78–leucine 104. At lysine 105–lysine 115 the chain is on the extracellular side. Cysteines 114 and 196 form a disulfide. The chain crosses the membrane as a helical span at residues threonine 116–leucine 137. The Cytoplasmic segment spans residues glutamate 138–histidine 157. Residues alanine 158–isoleucine 178 form a helical membrane-spanning segment. Residues tyrosine 179–histidine 210 lie on the Extracellular side of the membrane. Asparagine 190 carries an N-linked (GlcNAc...) asparagine glycan. Residues threonine 211–leucine 234 traverse the membrane as a helical segment. Over glutamate 235–arginine 312 the chain is Cytoplasmic. Residues methionine 313–alanine 333 traverse the membrane as a helical segment. Over tryptophan 334–glycine 348 the chain is Extracellular. Residues threonine 349–methionine 372 traverse the membrane as a helical segment. The Cytoplasmic segment spans residues asparagine 373–serine 427. Cysteine 386 is lipidated: S-palmitoyl cysteine. The disordered stretch occupies residues glycine 391 to serine 427. Positions serine 411–serine 421 are enriched in polar residues.

It belongs to the G-protein coupled receptor 1 family.

It localises to the cell membrane. In terms of biological role, receptor for cholecystokinin. Mediates pancreatic growth and enzyme secretion, smooth muscle contraction of the gall bladder and stomach. Has a 1000-fold higher affinity for CCK rather than for gastrin. It modulates feeding and dopamine-induced behavior in the central and peripheral nervous system. This receptor mediates its action by association with G proteins that activate a phosphatidylinositol-calcium second messenger system. The chain is Cholecystokinin receptor type A (CCKAR) from Oryctolagus cuniculus (Rabbit).